We begin with the raw amino-acid sequence, 452 residues long: Pup--protein ligase (452 aa).

E9 is a binding site for Mg(2+). Residue R53 coordinates ATP. Y55 contributes to the Mg(2+) binding site. D57 (proton acceptor) is an active-site residue. A Mg(2+)-binding site is contributed by E63. Residues T66 and W419 each coordinate ATP.

The protein belongs to the Pup ligase/Pup deamidase family. Pup-conjugating enzyme subfamily.

The catalysed reaction is ATP + [prokaryotic ubiquitin-like protein]-L-glutamate + [protein]-L-lysine = ADP + phosphate + N(6)-([prokaryotic ubiquitin-like protein]-gamma-L-glutamyl)-[protein]-L-lysine.. The protein operates within protein degradation; proteasomal Pup-dependent pathway. It functions in the pathway protein modification; protein pupylation. Functionally, catalyzes the covalent attachment of the prokaryotic ubiquitin-like protein modifier Pup to the proteasomal substrate proteins, thereby targeting them for proteasomal degradation. This tagging system is termed pupylation. The ligation reaction involves the side-chain carboxylate of the C-terminal glutamate of Pup and the side-chain amino group of a substrate lysine. The protein is Pup--protein ligase of Mycolicibacterium vanbaalenii (strain DSM 7251 / JCM 13017 / BCRC 16820 / KCTC 9966 / NRRL B-24157 / PYR-1) (Mycobacterium vanbaalenii).